Here is a 206-residue protein sequence, read N- to C-terminus: MSNVRSKICGITRIEDALAAAEAGADAIGFVFYAKSPRAVDVRQARAIIAELPPFVTTVGLFVNASRCELNEILEVVPLDLLQFHGDETPQDCEGYHRPWIKALRVRPGDDLEAACRLYAGARGILLDTYVPGVPGGTGEAFDWSLVPARLGKPIILAGGLSADNVGQAIAQVKPYAVDVSGGVEQAKGIKDAAKIEAFMRAVKQA.

This sequence belongs to the TrpF family.

The enzyme catalyses N-(5-phospho-beta-D-ribosyl)anthranilate = 1-(2-carboxyphenylamino)-1-deoxy-D-ribulose 5-phosphate. The protein operates within amino-acid biosynthesis; L-tryptophan biosynthesis; L-tryptophan from chorismate: step 3/5. In Pseudomonas putida (strain ATCC 47054 / DSM 6125 / CFBP 8728 / NCIMB 11950 / KT2440), this protein is N-(5'-phosphoribosyl)anthranilate isomerase.